A 145-amino-acid chain; its full sequence is 3-hydroxyacyl-[acyl-carrier-protein] dehydratase FabZ (145 aa).

His-49 is a catalytic residue.

This sequence belongs to the thioester dehydratase family. FabZ subfamily.

The protein localises to the cytoplasm. The catalysed reaction is a (3R)-hydroxyacyl-[ACP] = a (2E)-enoyl-[ACP] + H2O. Involved in unsaturated fatty acids biosynthesis. Catalyzes the dehydration of short chain beta-hydroxyacyl-ACPs and long chain saturated and unsaturated beta-hydroxyacyl-ACPs. In Rickettsia bellii (strain OSU 85-389), this protein is 3-hydroxyacyl-[acyl-carrier-protein] dehydratase FabZ.